Reading from the N-terminus, the 219-residue chain is Probable nicotinate-nucleotide adenylyltransferase (219 aa).

This sequence belongs to the NadD family.

The enzyme catalyses nicotinate beta-D-ribonucleotide + ATP + H(+) = deamido-NAD(+) + diphosphate. It functions in the pathway cofactor biosynthesis; NAD(+) biosynthesis; deamido-NAD(+) from nicotinate D-ribonucleotide: step 1/1. Functionally, catalyzes the reversible adenylation of nicotinate mononucleotide (NaMN) to nicotinic acid adenine dinucleotide (NaAD). In Chromohalobacter salexigens (strain ATCC BAA-138 / DSM 3043 / CIP 106854 / NCIMB 13768 / 1H11), this protein is Probable nicotinate-nucleotide adenylyltransferase.